A 348-amino-acid polypeptide reads, in one-letter code: Methylthioribose-1-phosphate isomerase (348 aa).

Substrate is bound by residues 48 to 50 (RGA), Arg90, and Gln195. Catalysis depends on Asp236, which acts as the Proton donor. 246-247 (NK) provides a ligand contact to substrate.

Belongs to the eIF-2B alpha/beta/delta subunits family. MtnA subfamily.

It catalyses the reaction 5-(methylsulfanyl)-alpha-D-ribose 1-phosphate = 5-(methylsulfanyl)-D-ribulose 1-phosphate. It participates in amino-acid biosynthesis; L-methionine biosynthesis via salvage pathway; L-methionine from S-methyl-5-thio-alpha-D-ribose 1-phosphate: step 1/6. In terms of biological role, catalyzes the interconversion of methylthioribose-1-phosphate (MTR-1-P) into methylthioribulose-1-phosphate (MTRu-1-P). This is Methylthioribose-1-phosphate isomerase from Exiguobacterium sibiricum (strain DSM 17290 / CCUG 55495 / CIP 109462 / JCM 13490 / 255-15).